The following is a 163-amino-acid chain: ATP synthase subunit b 1 (163 aa).

The chain crosses the membrane as a helical span at residues 5 to 25 (FDATFFAFVGLVLFLALVVYL).

Belongs to the ATPase B chain family. F-type ATPases have 2 components, F(1) - the catalytic core - and F(0) - the membrane proton channel. F(1) has five subunits: alpha(3), beta(3), gamma(1), delta(1), epsilon(1). F(0) has three main subunits: a(1), b(2) and c(10-14). The alpha and beta chains form an alternating ring which encloses part of the gamma chain. F(1) is attached to F(0) by a central stalk formed by the gamma and epsilon chains, while a peripheral stalk is formed by the delta and b chains.

The protein resides in the cell inner membrane. Its function is as follows. F(1)F(0) ATP synthase produces ATP from ADP in the presence of a proton or sodium gradient. F-type ATPases consist of two structural domains, F(1) containing the extramembraneous catalytic core and F(0) containing the membrane proton channel, linked together by a central stalk and a peripheral stalk. During catalysis, ATP synthesis in the catalytic domain of F(1) is coupled via a rotary mechanism of the central stalk subunits to proton translocation. Functionally, component of the F(0) channel, it forms part of the peripheral stalk, linking F(1) to F(0). This chain is ATP synthase subunit b 1, found in Rhizobium leguminosarum bv. trifolii (strain WSM2304).